The primary structure comprises 808 residues: Probable ATP-dependent helicase MJ1401 (808 aa).

Residues 189–217 (YKIDELDIPEELKEIIKSRGIEELLPVQT) carry the Q motif motif. In terms of domain architecture, Helicase ATP-binding spans 221-391 (KAGLLNGDDL…QLNAKLVLYN (171 aa)). Residue 234 to 241 (SATSSGKT) coordinates ATP. A DEIH box motif is present at residues 336-339 (DEIH). One can recognise a Helicase C-terminal domain in the interval 396–585 (PLERHIIFCK…EDEEEEQILA (190 aa)).

It belongs to the DEAD box helicase family.

This chain is Probable ATP-dependent helicase MJ1401, found in Methanocaldococcus jannaschii (strain ATCC 43067 / DSM 2661 / JAL-1 / JCM 10045 / NBRC 100440) (Methanococcus jannaschii).